A 177-amino-acid polypeptide reads, in one-letter code: Ribonuclease alpha-sarcin (177 aa).

Residues 1–27 form the signal peptide; that stretch reads MVAIKNLVLVALTAVTALAVPSPLEAR. Disulfide bonds link Cys-33–Cys-175 and Cys-103–Cys-159. His-77 is an active-site residue. Positions 86–119 are disordered; the sequence is DGKLPKGRTPIKFGKSDCDRPPKHSKDGNGKTDH. Positions 99–119 are enriched in basic and acidic residues; the sequence is GKSDCDRPPKHSKDGNGKTDH. Glu-123 serves as the catalytic Proton acceptor. His-164 functions as the Proton donor in the catalytic mechanism.

Belongs to the ribonuclease U2 family.

Its subcellular location is the secreted. It catalyses the reaction a 28S rRNA containing guanosine-adenosine pair + H2O = an [RNA fragment]-3'-adenosine-3'-phosphate + a 5'-a hydroxy-guanosine-3'-[RNA fragment].. In terms of biological role, alpha-sarcin is specific for purines in both single- and double-stranded RNA. Its toxic action on eukaryotic cells is the result of cleavage of a single phosphodiester bond in the 60S subunit of ribosomes. Inhibits both the EFl (elongation factor 1)-dependent binding of aminoacyl-tRNA and the GTP-dependent binding of EF2 (elongation factor 2) to ribosomes. This Aspergillus giganteus protein is Ribonuclease alpha-sarcin (sar).